A 274-amino-acid polypeptide reads, in one-letter code: Diaminopimelate epimerase (274 aa).

Asn11, Gln44, and Asn64 together coordinate substrate. Cys73 acts as the Proton donor in catalysis. Substrate is bound by residues Gly74–Asn75, Asn157, Asn190, and Glu208–Arg209. Cys217 functions as the Proton acceptor in the catalytic mechanism. Substrate is bound at residue Gly218–Ser219.

It belongs to the diaminopimelate epimerase family. In terms of assembly, homodimer.

It localises to the cytoplasm. It carries out the reaction (2S,6S)-2,6-diaminopimelate = meso-2,6-diaminopimelate. Its pathway is amino-acid biosynthesis; L-lysine biosynthesis via DAP pathway; DL-2,6-diaminopimelate from LL-2,6-diaminopimelate: step 1/1. Functionally, catalyzes the stereoinversion of LL-2,6-diaminopimelate (L,L-DAP) to meso-diaminopimelate (meso-DAP), a precursor of L-lysine and an essential component of the bacterial peptidoglycan. The polypeptide is Diaminopimelate epimerase (Enterobacter sp. (strain 638)).